Consider the following 774-residue polypeptide: Lysyl oxidase homolog 2 (774 aa).

Residues 1 to 25 (MERRGSSCLCRCLALLALLPTLSLA) form the signal peptide. SRCR domains lie at 58 to 159 (LRLA…VVCS), 188 to 302 (IRAI…VSCV), 326 to 425 (VRLR…VRCN), and 435 to 544 (LRLN…VACS). 9 cysteine pairs are disulfide-bonded: Cys-84–Cys-148, Cys-97–Cys-158, Cys-128–Cys-138, Cys-218–Cys-291, Cys-231–Cys-301, Cys-265–Cys-275, Cys-351–Cys-414, Cys-364–Cys-424, and Cys-395–Cys-405. A glycan (N-linked (GlcNAc...) asparagine) is linked at Asn-288. Asn-455 carries an N-linked (GlcNAc...) asparagine glycan. 3 cysteine pairs are disulfide-bonded: Cys-464-Cys-530, Cys-477-Cys-543, and Cys-511-Cys-521. The lysyl-oxidase like stretch occupies residues 548 to 751 (PDLVLNAEIV…WMYNCHIGGS (204 aa)). The Ca(2+) site is built by Asp-549 and Leu-550. Disulfide bonds link Cys-573/Cys-625, Cys-579/Cys-695, Cys-657/Cys-673, and Cys-663/Cys-685. Residues His-626, His-628, and His-630 each coordinate Cu cation. Asn-644 carries N-linked (GlcNAc...) asparagine glycosylation. The segment at residues 653-689 (KASFCLEDTECEGDIQKSYECANFGEQGITMGCWDMY) is a cross-link (lysine tyrosylquinone (Lys-Tyr)). 2',4',5'-topaquinone is present on Tyr-689. Glu-722, Asp-724, Asn-727, and Asn-728 together coordinate Ca(2+). A disulfide bridge connects residues Cys-732 and Cys-746.

The protein belongs to the lysyl oxidase family. Component of some chromatin repressor complex. Interacts with SNAI1. Interacts with TAF10. Interacts with HSPA5. Interacts with EFEMP2. Requires Cu cation as cofactor. It depends on lysine tyrosylquinone residue as a cofactor. The lysine tyrosylquinone cross-link (LTQ) is generated by condensation of the epsilon-amino group of a lysine with a topaquinone produced by oxidation of tyrosine. Post-translationally, N-glycosylated. N-glycosylation on Asn-455 and Asn-644 may be essential for proper folding and secretion; may be composed of a fucosylated carbohydrates attached to a trimannose N-linked glycan core.

Its subcellular location is the secreted. The protein resides in the extracellular space. It is found in the extracellular matrix. The protein localises to the basement membrane. It localises to the nucleus. Its subcellular location is the chromosome. The protein resides in the endoplasmic reticulum. It carries out the reaction L-lysyl-[protein] + O2 + H2O = (S)-2-amino-6-oxohexanoyl-[protein] + H2O2 + NH4(+). Specifically inhibited by a mouse monoclonal antibody AB0023, inhibition occurs in a non-competitive manner. Mediates the post-translational oxidative deamination of lysine residues on target proteins leading to the formation of deaminated lysine (allysine). Acts as a transcription corepressor and specifically mediates deamination of trimethylated 'Lys-4' of histone H3 (H3K4me3), a specific tag for epigenetic transcriptional activation. Shows no activity against histone H3 when it is trimethylated on 'Lys-9' (H3K9me3) or 'Lys-27' (H3K27me3) or when 'Lys-4' is monomethylated (H3K4me1) or dimethylated (H3K4me2). Also mediates deamination of methylated TAF10, a member of the transcription factor IID (TFIID) complex, which induces release of TAF10 from promoters, leading to inhibition of TFIID-dependent transcription. LOXL2-mediated deamination of TAF10 results in transcriptional repression of genes required for embryonic stem cell pluripotency including POU5F1/OCT4, NANOG, KLF4 and SOX2. Involved in epithelial to mesenchymal transition (EMT) via interaction with SNAI1 and participates in repression of E-cadherin CDH1, probably by mediating deamination of histone H3. During EMT, involved with SNAI1 in negatively regulating pericentromeric heterochromatin transcription. SNAI1 recruits LOXL2 to pericentromeric regions to oxidize histone H3 and repress transcription which leads to release of heterochromatin component CBX5/HP1A, enabling chromatin reorganization and acquisition of mesenchymal traits. Interacts with the endoplasmic reticulum protein HSPA5 which activates the IRE1-XBP1 pathway of the unfolded protein response, leading to expression of several transcription factors involved in EMT and subsequent EMT induction. When secreted into the extracellular matrix, promotes cross-linking of extracellular matrix proteins by mediating oxidative deamination of peptidyl lysine residues in precursors to fibrous collagen and elastin. Acts as a regulator of sprouting angiogenesis, probably via collagen IV scaffolding. Acts as a regulator of chondrocyte differentiation, probably by regulating expression of factors that control chondrocyte differentiation. This chain is Lysyl oxidase homolog 2 (LOXL2), found in Bos taurus (Bovine).